Here is a 57-residue protein sequence, read N- to C-terminus: UPF0057 membrane protein T23F2.3 (57 aa).

2 helical membrane-spanning segments follow: residues 4-24 and 36-56; these read TCTD…GVFL and ILLT…VILA.

This sequence belongs to the UPF0057 (PMP3) family.

Its subcellular location is the membrane. This is UPF0057 membrane protein T23F2.3 from Caenorhabditis elegans.